We begin with the raw amino-acid sequence, 183 residues long: NADH-quinone oxidoreductase subunit A (183 aa).

3 consecutive transmembrane segments (helical) span residues 11 to 31, 63 to 83, and 98 to 118; these read IIAF…VPLL, FYLV…LYAW, and VVIF…VGAL. The interval 159-183 is disordered; sequence TGQIPAQSSGRVKSKTTPALSSEKE.

Belongs to the complex I subunit 3 family. NDH-1 is composed of 14 different subunits. Subunits NuoA, H, J, K, L, M, N constitute the membrane sector of the complex.

Its subcellular location is the cell inner membrane. The enzyme catalyses a quinone + NADH + 5 H(+)(in) = a quinol + NAD(+) + 4 H(+)(out). NDH-1 shuttles electrons from NADH, via FMN and iron-sulfur (Fe-S) centers, to quinones in the respiratory chain. The immediate electron acceptor for the enzyme in this species is believed to be ubiquinone. Couples the redox reaction to proton translocation (for every two electrons transferred, four hydrogen ions are translocated across the cytoplasmic membrane), and thus conserves the redox energy in a proton gradient. This Acinetobacter baumannii (strain AYE) protein is NADH-quinone oxidoreductase subunit A.